Reading from the N-terminus, the 1390-residue chain is ABC transporter G family member 43 (1390 aa).

The interval 1–22 (MTMPQTDGVEFASRNNLENGDG) is disordered. The region spanning 137-411 (SKLSRFTFSK…FEDCGFKCPQ (275 aa)) is the ABC transporter 1 domain. 171–178 (GPPGCGKT) is an ATP binding site. The 213-residue stretch at 489–701 (DMFKACSRRE…AEIGLTSNEF (213 aa)) folds into the ABC transmembrane type-2 1 domain. 6 helical membrane-spanning segments follow: residues 507 to 527 (FVYV…MTVY), 541 to 561 (YLLG…LPEL), 594 to 614 (IPIS…VIGY), 626 to 646 (LILF…GAVF), 651 to 671 (VATT…GFIV), and 737 to 757 (FGAL…ALTF). An ABC transporter 2 domain is found at 798–1043 (FTFQDVQYFI…VIEYFMSIPG (246 aa)). 835–842 (GVSGAGKT) contacts ATP. Positions 1115–1329 (EQFKACLWKQ…VLNGLLTSQY (215 aa)) constitute an ABC transmembrane type-2 2 domain. The next 7 helical transmembrane spans lie at 1134–1154 (YNLT…ILFL), 1173–1193 (MFTV…FCVA), 1218–1238 (VLVE…IVYP), 1253–1273 (FYSI…LVVV), 1279–1299 (IAFT…GYVM), 1307–1327 (WWIW…LLTS), and 1362–1382 (LVAV…AFFI).

The protein belongs to the ABC transporter superfamily. ABCG family. PDR (TC 3.A.1.205) subfamily.

The protein localises to the membrane. Its function is as follows. May be a general defense protein. This Arabidopsis thaliana (Mouse-ear cress) protein is ABC transporter G family member 43 (ABCG43).